A 90-amino-acid polypeptide reads, in one-letter code: Acylphosphatase (90 aa).

The 86-residue stretch at 3–88 (TWHMTAHGRV…GKFEDFDLRP (86 aa)) folds into the Acylphosphatase-like domain. Residues Arg18 and Asn36 contribute to the active site.

The protein belongs to the acylphosphatase family.

It carries out the reaction an acyl phosphate + H2O = a carboxylate + phosphate + H(+). This chain is Acylphosphatase (acyP), found in Cupriavidus pinatubonensis (strain JMP 134 / LMG 1197) (Cupriavidus necator (strain JMP 134)).